A 1026-amino-acid polypeptide reads, in one-letter code: Multidrug resistance protein MdtC (1026 aa).

11 helical membrane-spanning segments follow: residues 15–35, 333–353, 360–380, 387–407, 431–451, 463–483, 528–548, 853–873, 897–917, 953–973, and 984–1004; these read ILIA…LPVA, EVEE…FLFL, LIPA…MYLC, LSLM…IVVL, VGFT…PLLL, FAVT…TLTP, LVGV…IAIP, LILI…LYES, LFNA…IGIV, PIMM…LSGG, and ITIV…TPVV.

Belongs to the resistance-nodulation-cell division (RND) (TC 2.A.6) family. MdtC subfamily. Part of a tripartite efflux system composed of MdtA, MdtB and MdtC. MdtC forms a heteromultimer with MdtB.

Its subcellular location is the cell inner membrane. In Salmonella arizonae (strain ATCC BAA-731 / CDC346-86 / RSK2980), this protein is Multidrug resistance protein MdtC.